The following is a 998-amino-acid chain: Bifunctional glutamine synthetase adenylyltransferase/adenylyl-removing enzyme (998 aa).

An adenylyl removase region spans residues Met1–Leu487. The interval Gly492–Ser998 is adenylyl transferase.

Belongs to the GlnE family. The cofactor is Mg(2+).

It carries out the reaction [glutamine synthetase]-O(4)-(5'-adenylyl)-L-tyrosine + phosphate = [glutamine synthetase]-L-tyrosine + ADP. The enzyme catalyses [glutamine synthetase]-L-tyrosine + ATP = [glutamine synthetase]-O(4)-(5'-adenylyl)-L-tyrosine + diphosphate. Involved in the regulation of glutamine synthetase GlnA, a key enzyme in the process to assimilate ammonia. When cellular nitrogen levels are high, the C-terminal adenylyl transferase (AT) inactivates GlnA by covalent transfer of an adenylyl group from ATP to specific tyrosine residue of GlnA, thus reducing its activity. Conversely, when nitrogen levels are low, the N-terminal adenylyl removase (AR) activates GlnA by removing the adenylyl group by phosphorolysis, increasing its activity. The regulatory region of GlnE binds the signal transduction protein PII (GlnB) which indicates the nitrogen status of the cell. This is Bifunctional glutamine synthetase adenylyltransferase/adenylyl-removing enzyme from Mycolicibacterium paratuberculosis (strain ATCC BAA-968 / K-10) (Mycobacterium paratuberculosis).